The following is a 217-amino-acid chain: Probable transaldolase (217 aa).

Lys-83 (schiff-base intermediate with substrate) is an active-site residue.

It belongs to the transaldolase family. Type 3B subfamily.

Its subcellular location is the cytoplasm. It carries out the reaction D-sedoheptulose 7-phosphate + D-glyceraldehyde 3-phosphate = D-erythrose 4-phosphate + beta-D-fructose 6-phosphate. It participates in carbohydrate degradation; pentose phosphate pathway; D-glyceraldehyde 3-phosphate and beta-D-fructose 6-phosphate from D-ribose 5-phosphate and D-xylulose 5-phosphate (non-oxidative stage): step 2/3. In terms of biological role, transaldolase is important for the balance of metabolites in the pentose-phosphate pathway. This Clostridium botulinum (strain Loch Maree / Type A3) protein is Probable transaldolase.